A 340-amino-acid chain; its full sequence is Ribonucleoside-diphosphate reductase small subunit (340 aa).

Fe cation contacts are provided by Asp-94, Glu-124, and His-127. Tyr-131 is an active-site residue. Residues 180 to 200 (FILMILIEGIFFAASFAAIAY) form a helical membrane-spanning segment. Glu-187, Glu-221, and His-224 together coordinate Fe cation.

The protein belongs to the ribonucleoside diphosphate reductase small chain family. In terms of assembly, heterotetramer composed of a homodimer of the large subunit (R1) and a homodimer of the small subunit (R2). Larger multisubunit protein complex are also active, composed of (R1)n(R2)n. Fe cation is required as a cofactor.

The protein localises to the host membrane. It catalyses the reaction a 2'-deoxyribonucleoside 5'-diphosphate + [thioredoxin]-disulfide + H2O = a ribonucleoside 5'-diphosphate + [thioredoxin]-dithiol. Ribonucleoside-diphosphate reductase holoenzyme provides the precursors necessary for viral DNA synthesis. Allows virus growth in non-dividing cells, as well as reactivation from latency in infected hosts. Catalyzes the biosynthesis of deoxyribonucleotides from the corresponding ribonucleotides. The polypeptide is Ribonucleoside-diphosphate reductase small subunit (Human herpesvirus 1 (strain KOS) (HHV-1)).